Consider the following 408-residue polypeptide: Exodeoxyribonuclease 7 large subunit (408 aa).

This sequence belongs to the XseA family. Heterooligomer composed of large and small subunits.

The protein resides in the cytoplasm. It carries out the reaction Exonucleolytic cleavage in either 5'- to 3'- or 3'- to 5'-direction to yield nucleoside 5'-phosphates.. Functionally, bidirectionally degrades single-stranded DNA into large acid-insoluble oligonucleotides, which are then degraded further into small acid-soluble oligonucleotides. This is Exodeoxyribonuclease 7 large subunit from Alkaliphilus oremlandii (strain OhILAs) (Clostridium oremlandii (strain OhILAs)).